The sequence spans 249 residues: MAKVSELDVQLIAATAFHAPQGVDWEVDEGASESEALVEFAGRACYESFDKPNPRTASNQAYLHHILEVGHDALLEHATATLYIRGLSRSASHELVRHRHFSFSQLSQRFVHSEEAEVVLPKFIAEDEQLTRLTLQAADEARFVYEELLDALESKLEEEPNALLRKKQARQAARAVLPNLTESRIVVTGNYRAWRHFIGARATEQADTEMRQLAVTCLKLLREQSPVLFDDFHITTLADGTEMASSPYA.

One can recognise a ThyX domain in the interval 7 to 235 (LDVQLIAATA…PVLFDDFHIT (229 aa)). DUMP-binding positions include 94-97 (ELVR), 105-109 (QLSQR), and Arg174. Residues 97–99 (RHR) and Gln105 contribute to the FAD site. Positions 97 to 107 (RHRHFSFSQLS) match the ThyX motif motif. Residues 190 to 192 (NYR) and His196 contribute to the FAD site. Position 201 (Arg201) interacts with dUMP. Arg201 acts as the Involved in ionization of N3 of dUMP, leading to its activation in catalysis.

Belongs to the thymidylate synthase ThyX family. In terms of assembly, homotetramer. FAD is required as a cofactor.

The catalysed reaction is dUMP + (6R)-5,10-methylene-5,6,7,8-tetrahydrofolate + NADPH + H(+) = dTMP + (6S)-5,6,7,8-tetrahydrofolate + NADP(+). It functions in the pathway pyrimidine metabolism; dTTP biosynthesis. Catalyzes the reductive methylation of 2'-deoxyuridine-5'-monophosphate (dUMP) to 2'-deoxythymidine-5'-monophosphate (dTMP) while utilizing 5,10-methylenetetrahydrofolate (mTHF) as the methyl donor, and NADPH and FADH(2) as the reductant. This chain is Flavin-dependent thymidylate synthase, found in Corynebacterium aurimucosum (strain ATCC 700975 / DSM 44827 / CIP 107346 / CN-1) (Corynebacterium nigricans).